Reading from the N-terminus, the 315-residue chain is Aspartate carbamoyltransferase catalytic subunit (315 aa).

Carbamoyl phosphate-binding residues include R64 and T65. Residue K92 coordinates L-aspartate. 3 residues coordinate carbamoyl phosphate: R114, H142, and Q145. Positions 175 and 229 each coordinate L-aspartate. Residues G270 and P271 each coordinate carbamoyl phosphate.

Belongs to the aspartate/ornithine carbamoyltransferase superfamily. ATCase family. In terms of assembly, heterododecamer (2C3:3R2) of six catalytic PyrB chains organized as two trimers (C3), and six regulatory PyrI chains organized as three dimers (R2).

The catalysed reaction is carbamoyl phosphate + L-aspartate = N-carbamoyl-L-aspartate + phosphate + H(+). It functions in the pathway pyrimidine metabolism; UMP biosynthesis via de novo pathway; (S)-dihydroorotate from bicarbonate: step 2/3. Its function is as follows. Catalyzes the condensation of carbamoyl phosphate and aspartate to form carbamoyl aspartate and inorganic phosphate, the committed step in the de novo pyrimidine nucleotide biosynthesis pathway. In Bradyrhizobium diazoefficiens (strain JCM 10833 / BCRC 13528 / IAM 13628 / NBRC 14792 / USDA 110), this protein is Aspartate carbamoyltransferase catalytic subunit.